Here is a 90-residue protein sequence, read N- to C-terminus: Neuropeptide F (90 aa).

Residues 1–27 (MTFSTSSSFSRRALVALLVCTLLIDLS) form the signal peptide. The tract at residues 54–90 (KHAQHARPRFGKRSYLNPAGYGQDEQEDDWQDSTFTR) is disordered. Over residues 56 to 65 (AQHARPRFGK) the composition is skewed to basic residues. Phenylalanine 63 carries the post-translational modification Phenylalanine amide. Positions 67–90 (SYLNPAGYGQDEQEDDWQDSTFTR) are excised as a propeptide.

It belongs to the NPY family. As to expression, expressed in hemolymph, brain and midgut.

It is found in the secreted. Its function is as follows. An integral part of the sensory system that mediates food signaling, providing the neural basis for the regulation of food response; coordinates larval foraging and social behavior changes during development. May have a hormonal role in females. The sequence is that of Neuropeptide F (npf) from Aedes aegypti (Yellowfever mosquito).